A 315-amino-acid polypeptide reads, in one-letter code: Olfactory receptor 11A1 (315 aa).

The Extracellular portion of the chain corresponds to 1 to 27; that stretch reads MEIVSTGNETITEFVLLGFYDIPELHF. N-linked (GlcNAc...) asparagine glycosylation is present at Asn8. Residues 28–48 form a helical membrane-spanning segment; that stretch reads LFFIVFTAVYVFIIIGNMLII. The Cytoplasmic portion of the chain corresponds to 49-56; sequence VAVVSSQR. Residues 57 to 77 form a helical membrane-spanning segment; sequence LHKPMYIFLANLSFLDILYTS. Residues 78–100 are Extracellular-facing; sequence AVMPKMLEGFLQEATISVAGCLL. Cys98 and Cys190 form a disulfide bridge. The helical transmembrane segment at 101 to 121 threads the bilayer; sequence QFFIFGSLATAECLLLAVMAY. Topologically, residues 122 to 140 are cytoplasmic; sequence DRYLAICYPLHYPLLMGPR. A helical membrane pass occupies residues 141–161; sequence RYMGLVVTTWLSGFVVDGLVV. Residues 162-198 are Extracellular-facing; that stretch reads ALVAQLRFCGPNHIDQFYCDFMLFVGLACSDPRVAQV. The helical transmembrane segment at 199-218 threads the bilayer; the sequence is TTLILSVFCLTIPFGLILTS. The Cytoplasmic segment spans residues 219-238; the sequence is YARIVVAVLRVPAGASRRRA. Residues 239-259 form a helical membrane-spanning segment; sequence FSTCSSHLAVVTTFYGTLMIF. Residues 260-272 lie on the Extracellular side of the membrane; that stretch reads YVAPSAVHSQLLS. The helical transmembrane segment at 273–293 threads the bilayer; the sequence is KVFSLLYTVVTPLFNPVIYTM. The Cytoplasmic portion of the chain corresponds to 294-315; sequence RNKEVHQALRKILCIKQTETLD.

Belongs to the G-protein coupled receptor 1 family.

The protein resides in the cell membrane. Odorant receptor. The polypeptide is Olfactory receptor 11A1 (OR11A1) (Homo sapiens (Human)).